A 295-amino-acid polypeptide reads, in one-letter code: Non-selective voltage-gated ion channel VDAC2 (295 aa).

ATP is bound by residues Lys24 and Lys32. N6-acetyllysine; alternate is present on Lys32. Lys32 carries the N6-succinyllysine; alternate modification. A Glycyl lysine isopeptide (Lys-Gly) (interchain with G-Cter in ubiquitin); alternate cross-link involves residue Lys32. Beta stranded transmembrane passes span 38–47 (LVKLDVKTKS) and 51–59 (VEFSTSGSS). Residues Lys65 and Lys73 each participate in a glycyl lysine isopeptide (Lys-Gly) (interchain with G-Cter in ubiquitin) cross-link. Beta stranded transmembrane passes span 66–76 (VSGTLETKYKW), 81–88 (LTFTEKWN), 92–101 (TLGTEIAIED), and 107–116 (LKLTFDTTFS). Lys121 is subject to N6-acetyllysine; alternate. Residue Lys121 forms a Glycyl lysine isopeptide (Lys-Gly) (interchain with G-Cter in ubiquitin); alternate linkage. Glycyl lysine isopeptide (Lys-Gly) (interchain with G-Cter in ubiquitin) cross-links involve residues Lys122 and Lys125. A run of 4 beta stranded transmembrane segments spans residues 123–132 (SGKIKSAYKR), 135–142 (INLGCDVD), 149–157 (AIHGSAVFG), and 162–170 (LAGYQMTFD). A Glycyl lysine isopeptide (Lys-Gly) (interchain with G-Cter in ubiquitin) cross-link involves residue Lys173. 6 beta stranded membrane passes run 175 to 187 (KLTR…GYRT), 190 to 197 (FQLHTNVN), 201 to 210 (EFGGSIYQKV), 214 to 223 (FDTSVNLAWT), 230 to 239 (RFGIAAKYQL), and 243 to 250 (ASISAKVN). Ser205 is subject to Phosphoserine. Position 252 is a phosphoserine (Ser252). Residues 254–256 (LIG) and 272–276 (SALVD) each bind NAD(+). 2 beta stranded membrane passes run 254–263 (LIGVGYTQTL) and 266–275 (GVKLTLSALV). Lys278 carries the post-translational modification N6-acetyllysine; alternate. Lys278 is covalently cross-linked (Glycyl lysine isopeptide (Lys-Gly) (interchain with G-Cter in ubiquitin); alternate). The beta stranded transmembrane segment at 285-294 (HKLGLALELE) threads the bilayer. A Glycyl lysine isopeptide (Lys-Gly) (interchain with G-Cter in ubiquitin) cross-link involves residue Lys286.

Belongs to the eukaryotic mitochondrial porin family. In terms of assembly, monomer, homodimer and higher order oligomers; formation of higher order structures is necessary for scramblase activity. Interacts with ARMC12 in a TBC1D21-dependent manner. Interacts with KLC3. Interacts with SPATA33. Interacts with PPP3CC in a SPATA33-dependent manner. Post-translationally, ubiquitinated by PRKN during mitophagy, leading to its degradation and enhancement of mitophagy. Deubiquitinated by USP30.

The protein localises to the mitochondrion outer membrane. The protein resides in the membrane. The enzyme catalyses chloride(in) = chloride(out). It catalyses the reaction K(+)(in) = K(+)(out). It carries out the reaction a 1,2-diacyl-sn-glycero-3-phospho-L-serine(in) = a 1,2-diacyl-sn-glycero-3-phospho-L-serine(out). The catalysed reaction is a 1,2-diacyl-sn-glycero-3-phosphocholine(in) = a 1,2-diacyl-sn-glycero-3-phosphocholine(out). The enzyme catalyses a 1,2-diacyl-sn-glycero-3-phospho-(1D-myo-inositol)(in) = a 1,2-diacyl-sn-glycero-3-phospho-(1D-myo-inositol)(out). Its function is as follows. Non-selective voltage-gated ion channel that mediates the transport of anions and cations through the mitochondrion outer membrane and plasma membrane. The channel adopts an open conformation at zero mV and a closed conformation at both positive and negative potentials. There are two populations of channels; the main that functions in a lower open-state conductance with lower ion selectivity, that switch, in a voltage-dependent manner, from the open to a low-conducting 'closed' state and the other that has a normal ion selectivity in the typical high conductance, 'open' state. Binds various lipids, including the sphingolipid ceramide, the phospholipid phosphatidylcholine, and the sterols cholesterol and oxysterol. Binding of ceramide promotes the mitochondrial outer membrane permeabilization (MOMP) apoptotic pathway. Functionally, catalyzes the scrambling of phospholipids across the outer mitochondrial membrane; the mechanism is unrelated to channel activity and is capable of translocating both anionic and zwitterionic phospholipids. This chain is Non-selective voltage-gated ion channel VDAC2, found in Mesocricetus auratus (Golden hamster).